A 257-amino-acid polypeptide reads, in one-letter code: uncharacterized protein (257 aa).

Positions 1–22 (MIHSKRLRLWLYLVLLAVFIGA) are cleaved as a signal peptide. A lipid anchor (N-palmitoyl cysteine) is attached at Cys23. Cys23 carries the S-diacylglycerol cysteine lipid modification.

This sequence belongs to the staphylococcal tandem lipoprotein family.

It is found in the cell membrane. This is an uncharacterized protein from Staphylococcus aureus (strain NCTC 8325 / PS 47).